Here is a 329-residue protein sequence, read N- to C-terminus: Beta-ketoacyl-[acyl-carrier-protein] synthase III (329 aa).

Residues Cys113 and His256 contribute to the active site. An ACP-binding region spans residues 257 to 261; that stretch reads QANQR. Asn286 is an active-site residue.

Belongs to the thiolase-like superfamily. FabH family. Homodimer.

Its subcellular location is the cytoplasm. It catalyses the reaction malonyl-[ACP] + acetyl-CoA + H(+) = 3-oxobutanoyl-[ACP] + CO2 + CoA. It participates in lipid metabolism; fatty acid biosynthesis. In terms of biological role, catalyzes the condensation reaction of fatty acid synthesis by the addition to an acyl acceptor of two carbons from malonyl-ACP. Catalyzes the first condensation reaction which initiates fatty acid synthesis and may therefore play a role in governing the total rate of fatty acid production. Possesses both acetoacetyl-ACP synthase and acetyl transacylase activities. Its substrate specificity determines the biosynthesis of branched-chain and/or straight-chain of fatty acids. This is Beta-ketoacyl-[acyl-carrier-protein] synthase III from Natranaerobius thermophilus (strain ATCC BAA-1301 / DSM 18059 / JW/NM-WN-LF).